Here is a 122-residue protein sequence, read N- to C-terminus: Large ribosomal subunit protein uL14 (122 aa).

Belongs to the universal ribosomal protein uL14 family. In terms of assembly, part of the 50S ribosomal subunit. Forms a cluster with proteins L3 and L19. In the 70S ribosome, L14 and L19 interact and together make contacts with the 16S rRNA in bridges B5 and B8.

Its function is as follows. Binds to 23S rRNA. Forms part of two intersubunit bridges in the 70S ribosome. In Rippkaea orientalis (strain PCC 8801 / RF-1) (Cyanothece sp. (strain PCC 8801)), this protein is Large ribosomal subunit protein uL14.